The primary structure comprises 245 residues: MAAFTIYPAVDMRGGKCVRLLQGDYNKETVYGDSPVAMAEQFAAQGAEWIHMVDLDGAKEGRRVNDRFVIEAARRLSVHVQVGGGIRTEEDIVHYLENGVARVILGSAAISDPPFVKKMLQKYGRRIVIGIDARDGFVATEGWLATSNVKAEELGRMLAEAGAETFIFTDIATDGTLSGPNIAAAVRLAEATGKEVIASGGVSSLDDLRALCQYAGQGIGGAIVGKALYTNQFTLAEALKVVNER.

Asp11 acts as the Proton acceptor in catalysis. Asp132 serves as the catalytic Proton donor.

Belongs to the HisA/HisF family.

It is found in the cytoplasm. The enzyme catalyses 1-(5-phospho-beta-D-ribosyl)-5-[(5-phospho-beta-D-ribosylamino)methylideneamino]imidazole-4-carboxamide = 5-[(5-phospho-1-deoxy-D-ribulos-1-ylimino)methylamino]-1-(5-phospho-beta-D-ribosyl)imidazole-4-carboxamide. It participates in amino-acid biosynthesis; L-histidine biosynthesis; L-histidine from 5-phospho-alpha-D-ribose 1-diphosphate: step 4/9. The chain is 1-(5-phosphoribosyl)-5-[(5-phosphoribosylamino)methylideneamino] imidazole-4-carboxamide isomerase from Geobacillus kaustophilus (strain HTA426).